Consider the following 148-residue polypeptide: Large ribosomal subunit protein bL9 (148 aa).

It belongs to the bacterial ribosomal protein bL9 family.

Binds to the 23S rRNA. The polypeptide is Large ribosomal subunit protein bL9 (Chromohalobacter salexigens (strain ATCC BAA-138 / DSM 3043 / CIP 106854 / NCIMB 13768 / 1H11)).